The sequence spans 261 residues: Kallikrein 1-related peptidase b3 (261 aa).

Residues methionine 1 to alanine 18 form the signal peptide. Positions proline 19–arginine 24 are cleaved as a propeptide — activation peptide. Positions isoleucine 25–arginine 107 are segment B1. The Peptidase S1 domain maps to isoleucine 25–alanine 258. 5 disulfides stabilise this stretch: cysteine 31-cysteine 173, cysteine 50-cysteine 66, cysteine 152-cysteine 219, cysteine 184-cysteine 198, and cysteine 209-cysteine 234. Histidine 65 (charge relay system) is an active-site residue. The N-linked (GlcNAc...) asparagine glycan is linked to asparagine 102. A segment C region spans residues phenylalanine 112–lysine 164. The interval phenylalanine 112 to proline 261 is segment A. The active-site Charge relay system is aspartate 120. The tract at residues phenylalanine 165–proline 261 is segment B2. Serine 213 (charge relay system) is an active-site residue. Residues histidine 231 and glutamate 236 each contribute to the Zn(2+) site.

The protein belongs to the peptidase S1 family. Kallikrein subfamily. As to quaternary structure, 7S nerve growth factor is composed of two alpha chains, a beta dimer composed of identical chains, and two gamma chains. Zn(2+) is required as a cofactor.

The catalysed reaction is Preferential cleavage of Arg-|-Xaa bonds in small molecule substrates. Highly selective action to release kallidin (lysyl-bradykinin) from kininogen involves hydrolysis of Met-|-Xaa or Leu-|-Xaa.. Its function is as follows. 7S NGF alpha chain stabilizes the 7S complex. The beta dimer promotes neurite growth. The gamma chain is an arginine-specific protease; it may also have plasminogen activator activity, as well as mitogenic activity for chick embryo fibroblasts. This Mus musculus (Mouse) protein is Kallikrein 1-related peptidase b3 (Klk1b3).